We begin with the raw amino-acid sequence, 603 residues long: MRVSRLMLVTLRDVPAEAEIVSHQLLIRGGFIKRVTSGIYAYMPLMWKVIKKITSIVQEELDSKGCLETLLPQLHPAELWKESGRWDGYTAGEGIMFHLSDRQGRELGLGPTHEEVITKIANEFLQSYKQLPVNLYQIQTKFRDEIRPRFGLMRSREFIMKDAYSFHADETNLKETYLEMNDAYEKIFKRCGLETVAVDADSGAIGGAESREFMVTAEAGEDLILLSPDKKYAANQEKAISKFADPIFLDKKEPCIIQTNGQRTIKELCDNQGFHPSQILKVIILLAVLEKNDLQPILVSIRGDQELNEVKLINAVSKYLKKSVISIKTITKEQLDSQKLLDIPLGFVGPDLKDSYLNKAANWNKKFIRFTDITASNLDSFICGANTIDQHRAFVNWSKVGGLPEIVDIRNAMPGDISIHDPKQKLIAKRGIEVGHIFQLGRKYSSCLQASFTNEMGLEEPFWMGCYGIGISRLAQASVEQNYDQSGIIWPLGIAPFEVIVIVANMKDDLQRELGEKLYSQLKDEGVDVLIDDRKERAGVKFKDADLIGIPWKIISGRDSATGIVELVERSTGISKSLKAEEAIKELLEEISNYKKSILQESL.

The protein belongs to the class-II aminoacyl-tRNA synthetase family. ProS type 1 subfamily. Homodimer.

The protein localises to the cytoplasm. The catalysed reaction is tRNA(Pro) + L-proline + ATP = L-prolyl-tRNA(Pro) + AMP + diphosphate. Catalyzes the attachment of proline to tRNA(Pro) in a two-step reaction: proline is first activated by ATP to form Pro-AMP and then transferred to the acceptor end of tRNA(Pro). As ProRS can inadvertently accommodate and process non-cognate amino acids such as alanine and cysteine, to avoid such errors it has two additional distinct editing activities against alanine. One activity is designated as 'pretransfer' editing and involves the tRNA(Pro)-independent hydrolysis of activated Ala-AMP. The other activity is designated 'posttransfer' editing and involves deacylation of mischarged Ala-tRNA(Pro). The misacylated Cys-tRNA(Pro) is not edited by ProRS. This chain is Proline--tRNA ligase, found in Prochlorococcus marinus (strain SARG / CCMP1375 / SS120).